The chain runs to 426 residues: Phosphomethylpyrimidine synthase (426 aa).

Substrate contacts are provided by residues N65, M94, Y123, H162, 184-186, 225-228, and E264; these read SRG and DGMR. H268 contributes to the Zn(2+) binding site. Position 291 (Y291) interacts with substrate. A Zn(2+)-binding site is contributed by H332. [4Fe-4S] cluster is bound by residues C408, C411, and C415.

It belongs to the ThiC family. [4Fe-4S] cluster is required as a cofactor.

The catalysed reaction is 5-amino-1-(5-phospho-beta-D-ribosyl)imidazole + S-adenosyl-L-methionine = 4-amino-2-methyl-5-(phosphooxymethyl)pyrimidine + CO + 5'-deoxyadenosine + formate + L-methionine + 3 H(+). The protein operates within cofactor biosynthesis; thiamine diphosphate biosynthesis. In terms of biological role, catalyzes the synthesis of the hydroxymethylpyrimidine phosphate (HMP-P) moiety of thiamine from aminoimidazole ribotide (AIR) in a radical S-adenosyl-L-methionine (SAM)-dependent reaction. The chain is Phosphomethylpyrimidine synthase from Methanocaldococcus jannaschii (strain ATCC 43067 / DSM 2661 / JAL-1 / JCM 10045 / NBRC 100440) (Methanococcus jannaschii).